Consider the following 345-residue polypeptide: Homeobox-leucine zipper protein HOX16 (345 aa).

A DNA-binding region (homeobox) is located at residues L76 to Q135. Positions K134–K178 are leucine-zipper. The segment at F220–S241 is disordered.

It belongs to the HD-ZIP homeobox family. Class I subfamily. In terms of tissue distribution, expressed in seedlings, stems, leaf sheaths and blades and panicles.

Its subcellular location is the nucleus. Its function is as follows. Probable transcription factor. The protein is Homeobox-leucine zipper protein HOX16 (HOX16) of Oryza sativa subsp. indica (Rice).